Reading from the N-terminus, the 182-residue chain is Acireductone dioxygenase (182 aa).

The Fe(2+) site is built by His100, His102, Glu106, and His145. Residues His100, His102, Glu106, and His145 each coordinate Ni(2+).

It belongs to the acireductone dioxygenase (ARD) family. Monomer. Fe(2+) serves as cofactor. Ni(2+) is required as a cofactor.

It catalyses the reaction 1,2-dihydroxy-5-(methylsulfanyl)pent-1-en-3-one + O2 = 3-(methylsulfanyl)propanoate + CO + formate + 2 H(+). The catalysed reaction is 1,2-dihydroxy-5-(methylsulfanyl)pent-1-en-3-one + O2 = 4-methylsulfanyl-2-oxobutanoate + formate + 2 H(+). It participates in amino-acid biosynthesis; L-methionine biosynthesis via salvage pathway; L-methionine from S-methyl-5-thio-alpha-D-ribose 1-phosphate: step 5/6. In terms of biological role, catalyzes 2 different reactions between oxygen and the acireductone 1,2-dihydroxy-3-keto-5-methylthiopentene (DHK-MTPene) depending upon the metal bound in the active site. Fe-containing acireductone dioxygenase (Fe-ARD) produces formate and 2-keto-4-methylthiobutyrate (KMTB), the alpha-ketoacid precursor of methionine in the methionine recycle pathway. Ni-containing acireductone dioxygenase (Ni-ARD) produces methylthiopropionate, carbon monoxide and formate, and does not lie on the methionine recycle pathway. The sequence is that of Acireductone dioxygenase from Trichormus variabilis (strain ATCC 29413 / PCC 7937) (Anabaena variabilis).